Consider the following 410-residue polypeptide: Platelet-activating factor acetylhydrolase IB subunit alpha (410 aa).

A required for self-association and interaction with PAFAH1B2 and PAFAH1B3 region spans residues 1-38 (MVLSQRQRDELNRAIADYLRSNGYEEAYSVFKKEAELD). Residues 1–66 (MVLSQRQRDE…SVIRLQKKVM (66 aa)) form an interaction with NDE1 region. The interval 1-102 (MVLSQRQRDE…EWIPRPPEKY (102 aa)) is interaction with NDEL1. The LisH domain maps to 7 to 39 (QRDELNRAIADYLRSNGYEEAYSVFKKEAELDM). The residue at position 53 (Lys53) is an N6-acetyllysine. Residues 56 to 82 (TSVIRLQKKVMELESKLNEAKEEFTSG) adopt a coiled-coil conformation. The tract at residues 83-410 (GPLGQKRDPK…DQTVKVWECR (328 aa)) is interaction with dynein and dynactin. 7 WD repeats span residues 106-147 (GHRS…RTLK), 148-187 (GHTD…CIRT), 190-229 (GHDH…CVKT), 232-271 (GHRE…CKAE), 274-333 (EHEH…CLMT), 336-377 (GHDN…KTLN), and 378-410 (AHEH…WECR). A Phosphoserine modification is found at Ser109. Residues 367–409 (YKNKRCMKTLNAHEHFVTSLDFHKTAPYVVTGSVDQTVKVWEC) are interaction with DCX. The tract at residues 388–410 (FHKTAPYVVTGSVDQTVKVWECR) is interaction with NDEL1.

The protein belongs to the WD repeat LIS1/nudF family. Can self-associate. Component of the cytosolic PAF-AH (I) heterotetrameric enzyme, which is composed of PAFAH1B1 (beta), PAFAH1B2 (alpha2) and PAFAH1B3 (alpha1) subunits. The catalytic activity of the enzyme resides in the alpha1 (PAFAH1B3) and alpha2 (PAFAH1B2) subunits, whereas the beta subunit (PAFAH1B1) has regulatory activity. Trimer formation is not essential for the catalytic activity. Interacts with the catalytic dimer of PAF-AH (I) heterotetrameric enzyme: interacts with PAFAH1B2 homodimer (alpha2/alpha2 homodimer), PAFAH1B3 homodimer (alpha1/alpha1 homodimer) and PAFAH1B2-PAFAH1B3 heterodimer (alpha2/alpha1 heterodimer). Interacts with DCX, dynein, dynactin, IQGAP1, KATNB1, NDE1, NDEL1, NUDC and RSN. Interacts with DISC1, and this interaction is enhanced by NDEL1. Interacts with DAB1 when DAB1 is phosphorylated in response to RELN/reelin signaling. Interacts with INTS13. Interacts with DCDC1.

It is found in the cytoplasm. The protein localises to the cytoskeleton. The protein resides in the microtubule organizing center. It localises to the centrosome. Its subcellular location is the spindle. It is found in the nucleus membrane. Functionally, regulatory subunit (beta subunit) of the cytosolic type I platelet-activating factor (PAF) acetylhydrolase (PAF-AH (I)), an enzyme that catalyzes the hydrolyze of the acetyl group at the sn-2 position of PAF and its analogs and participates in PAF inactivation. Regulates the PAF-AH (I) activity in a catalytic dimer composition-dependent manner. Positively regulates the activity of the minus-end directed microtubule motor protein dynein. May enhance dynein-mediated microtubule sliding by targeting dynein to the microtubule plus end. Required for several dynein- and microtubule-dependent processes such as the maintenance of Golgi integrity, the peripheral transport of microtubule fragments and the coupling of the nucleus and centrosome. Required during brain development for the proliferation of neuronal precursors and the migration of newly formed neurons from the ventricular/subventricular zone toward the cortical plate. Neuronal migration involves a process called nucleokinesis, whereby migrating cells extend an anterior process into which the nucleus subsequently translocates. During nucleokinesis dynein at the nuclear surface may translocate the nucleus towards the centrosome by exerting force on centrosomal microtubules. Also required for proper activation of Rho GTPases and actin polymerization at the leading edge of locomoting cerebellar neurons and postmigratory hippocampal neurons in response to calcium influx triggered via NMDA receptors. May also play a role in other forms of cell locomotion including the migration of fibroblasts during wound healing. Required for dynein recruitment to microtubule plus ends and BICD2-bound cargos. May modulate the Reelin pathway through interaction of the PAF-AH (I) catalytic dimer with VLDLR. The polypeptide is Platelet-activating factor acetylhydrolase IB subunit alpha (Macaca fascicularis (Crab-eating macaque)).